The primary structure comprises 327 residues: tRNA uridine(34) hydroxylase (327 aa).

The region spanning 142–240 (DDPDTLVIDT…YLEQVPEAES (99 aa)) is the Rhodanese domain. Catalysis depends on Cys200, which acts as the Cysteine persulfide intermediate.

It belongs to the TrhO family.

The enzyme catalyses uridine(34) in tRNA + AH2 + O2 = 5-hydroxyuridine(34) in tRNA + A + H2O. Catalyzes oxygen-dependent 5-hydroxyuridine (ho5U) modification at position 34 in tRNAs. This is tRNA uridine(34) hydroxylase from Synechococcus sp. (strain CC9605).